The primary structure comprises 272 residues: Endogenous Bornavirus-like nucleoprotein 2 (272 aa).

Residues 48–70 form a disordered region; that stretch reads MSHLRKDSQPSSPGDDAMDRSGL.

Functionally, may act as an RNA-binding protein. The C-terminal region is highly homologous to the bornavirus nucleocapsid N protein that binds viral RNA and oligomerizes. The viral protein also possesses a nuclear import and a nuclear export signal. These 2 signals seem absent in EBLN-2 supporting an unrelated function in Human. The protein is Endogenous Bornavirus-like nucleoprotein 2 (EBLN2) of Homo sapiens (Human).